Consider the following 245-residue polypeptide: 1-(5-phosphoribosyl)-5-[(5-phosphoribosylamino)methylideneamino] imidazole-4-carboxamide isomerase (245 aa).

Asp7 acts as the Proton acceptor in catalysis. Asp129 serves as the catalytic Proton donor.

The protein belongs to the HisA/HisF family.

Its subcellular location is the cytoplasm. The catalysed reaction is 1-(5-phospho-beta-D-ribosyl)-5-[(5-phospho-beta-D-ribosylamino)methylideneamino]imidazole-4-carboxamide = 5-[(5-phospho-1-deoxy-D-ribulos-1-ylimino)methylamino]-1-(5-phospho-beta-D-ribosyl)imidazole-4-carboxamide. The protein operates within amino-acid biosynthesis; L-histidine biosynthesis; L-histidine from 5-phospho-alpha-D-ribose 1-diphosphate: step 4/9. The polypeptide is 1-(5-phosphoribosyl)-5-[(5-phosphoribosylamino)methylideneamino] imidazole-4-carboxamide isomerase (Erwinia tasmaniensis (strain DSM 17950 / CFBP 7177 / CIP 109463 / NCPPB 4357 / Et1/99)).